The chain runs to 340 residues: Uroporphyrinogen decarboxylase (340 aa).

Substrate contacts are provided by residues 21–25, aspartate 71, tyrosine 148, serine 203, and histidine 316; that span reads RQAGR.

It belongs to the uroporphyrinogen decarboxylase family. Homodimer.

Its subcellular location is the cytoplasm. The enzyme catalyses uroporphyrinogen III + 4 H(+) = coproporphyrinogen III + 4 CO2. It functions in the pathway porphyrin-containing compound metabolism; protoporphyrin-IX biosynthesis; coproporphyrinogen-III from 5-aminolevulinate: step 4/4. In terms of biological role, catalyzes the decarboxylation of four acetate groups of uroporphyrinogen-III to yield coproporphyrinogen-III. The polypeptide is Uroporphyrinogen decarboxylase (Campylobacter concisus (strain 13826)).